The following is a 159-amino-acid chain: 2-C-methyl-D-erythritol 2,4-cyclodiphosphate synthase (159 aa).

A divalent metal cation contacts are provided by Asp10 and His12. 4-CDP-2-C-methyl-D-erythritol 2-phosphate-binding positions include 10-12 (DVH) and 37-38 (HS). His45 contributes to the a divalent metal cation binding site. 4-CDP-2-C-methyl-D-erythritol 2-phosphate-binding positions include 59-61 (DIG), 64-68 (FLDTD), 103-109 (AQAPKML), 135-138 (TTTE), Phe142, and Arg145.

Belongs to the IspF family. As to quaternary structure, homotrimer. It depends on a divalent metal cation as a cofactor.

The enzyme catalyses 4-CDP-2-C-methyl-D-erythritol 2-phosphate = 2-C-methyl-D-erythritol 2,4-cyclic diphosphate + CMP. The protein operates within isoprenoid biosynthesis; isopentenyl diphosphate biosynthesis via DXP pathway; isopentenyl diphosphate from 1-deoxy-D-xylulose 5-phosphate: step 4/6. Its function is as follows. Involved in the biosynthesis of isopentenyl diphosphate (IPP) and dimethylallyl diphosphate (DMAPP), two major building blocks of isoprenoid compounds. Catalyzes the conversion of 4-diphosphocytidyl-2-C-methyl-D-erythritol 2-phosphate (CDP-ME2P) to 2-C-methyl-D-erythritol 2,4-cyclodiphosphate (ME-CPP) with a corresponding release of cytidine 5-monophosphate (CMP). The sequence is that of 2-C-methyl-D-erythritol 2,4-cyclodiphosphate synthase from Francisella tularensis subsp. tularensis (strain FSC 198).